Here is a 357-residue protein sequence, read N- to C-terminus: 3-isopropylmalate dehydrogenase (357 aa).

76–89 (GPQWDTIDPSLRPE) contributes to the NAD(+) binding site. 4 residues coordinate substrate: Arg96, Arg106, Arg134, and Asp224. Asp224, Asp248, and Asp252 together coordinate Mg(2+). Position 282-294 (282-294 (GSAPDIAGKGIAN)) interacts with NAD(+).

This sequence belongs to the isocitrate and isopropylmalate dehydrogenases family. LeuB type 1 subfamily. As to quaternary structure, homodimer. It depends on Mg(2+) as a cofactor. Mn(2+) serves as cofactor.

Its subcellular location is the cytoplasm. The enzyme catalyses (2R,3S)-3-isopropylmalate + NAD(+) = 4-methyl-2-oxopentanoate + CO2 + NADH. It participates in amino-acid biosynthesis; L-leucine biosynthesis; L-leucine from 3-methyl-2-oxobutanoate: step 3/4. In terms of biological role, catalyzes the oxidation of 3-carboxy-2-hydroxy-4-methylpentanoate (3-isopropylmalate) to 3-carboxy-4-methyl-2-oxopentanoate. The product decarboxylates to 4-methyl-2 oxopentanoate. The protein is 3-isopropylmalate dehydrogenase of Xanthomonas euvesicatoria pv. vesicatoria (strain 85-10) (Xanthomonas campestris pv. vesicatoria).